The following is a 577-amino-acid chain: Nuclear fusion protein tht1 (577 aa).

A signal peptide spans 1-29 (MKFHPTRPFGLYFEFFIIISFFFTSESTG). Residues 30-404 (DVESFMKYSN…MNVYFKGLSN (375 aa)) lie on the Lumenal side of the membrane. N163 and N372 each carry an N-linked (GlcNAc...) asparagine glycan. A helical membrane pass occupies residues 405 to 425 (IISSFAFIGFTLFATLSSLFF). The Cytoplasmic segment spans residues 426-433 (KVLKIHRR). The helical transmembrane segment at 434–454 (PIIVFGSLSIIFIHIYCFKIT) threads the bilayer. At 455–470 (SWVNLYGWITCTIART) the chain is on the lumenal side. The chain crosses the membrane as a helical span at residues 471 to 491 (LSFIKLNIRTFYLTAFLCALL). Residues 492 to 577 (NFLRYLKYRN…ESLEQSPWWD (86 aa)) are Cytoplasmic-facing.

This sequence belongs to the KAR5 family. Post-translationally, N-glycosylated.

The protein localises to the endoplasmic reticulum membrane. The protein resides in the nucleus membrane. Required for nuclear membrane fusion during karyogamy. The polypeptide is Nuclear fusion protein tht1 (tht1) (Schizosaccharomyces pombe (strain 972 / ATCC 24843) (Fission yeast)).